The chain runs to 582 residues: Proline--tRNA ligase (582 aa).

The protein belongs to the class-II aminoacyl-tRNA synthetase family. ProS type 1 subfamily. As to quaternary structure, homodimer.

Its subcellular location is the cytoplasm. The enzyme catalyses tRNA(Pro) + L-proline + ATP = L-prolyl-tRNA(Pro) + AMP + diphosphate. Its function is as follows. Catalyzes the attachment of proline to tRNA(Pro) in a two-step reaction: proline is first activated by ATP to form Pro-AMP and then transferred to the acceptor end of tRNA(Pro). As ProRS can inadvertently accommodate and process non-cognate amino acids such as alanine and cysteine, to avoid such errors it has two additional distinct editing activities against alanine. One activity is designated as 'pretransfer' editing and involves the tRNA(Pro)-independent hydrolysis of activated Ala-AMP. The other activity is designated 'posttransfer' editing and involves deacylation of mischarged Ala-tRNA(Pro). The misacylated Cys-tRNA(Pro) is not edited by ProRS. The chain is Proline--tRNA ligase from Mycobacterium avium (strain 104).